Here is a 353-residue protein sequence, read N- to C-terminus: Chorismate synthase (353 aa).

Arginine 48 and arginine 54 together coordinate NADP(+). Residues 125-127 (RSS), 238-239 (NA), glycine 278, 293-297 (KPTSS), and arginine 319 each bind FMN.

It belongs to the chorismate synthase family. Homotetramer. Requires FMNH2 as cofactor.

It catalyses the reaction 5-O-(1-carboxyvinyl)-3-phosphoshikimate = chorismate + phosphate. The protein operates within metabolic intermediate biosynthesis; chorismate biosynthesis; chorismate from D-erythrose 4-phosphate and phosphoenolpyruvate: step 7/7. Functionally, catalyzes the anti-1,4-elimination of the C-3 phosphate and the C-6 proR hydrogen from 5-enolpyruvylshikimate-3-phosphate (EPSP) to yield chorismate, which is the branch point compound that serves as the starting substrate for the three terminal pathways of aromatic amino acid biosynthesis. This reaction introduces a second double bond into the aromatic ring system. The sequence is that of Chorismate synthase from Bordetella bronchiseptica (strain ATCC BAA-588 / NCTC 13252 / RB50) (Alcaligenes bronchisepticus).